A 393-amino-acid chain; its full sequence is E3 ubiquitin-protein transferase RMND5B (393 aa).

Met1 carries the post-translational modification N-acetylmethionine. In terms of domain architecture, LisH spans 116–148 (QQQILQMAIVEHLYQQGMLSVAEELCQESTLNV). The 58-residue stretch at 155-212 (PFLELNRILEALHEQDLGPALEWAVSHRQRLLELNSSLEFKLHRLHFIRLLAGGPEKQ) folds into the CTLH domain. The RING-Gid-type zinc finger occupies 338–379 (CPILRQQTSDSNPPIKLICGHVISRDALNKLINGGKLKCPYC).

Identified in the CTLH complex that contains GID4, RANBP9 and/or RANBP10, MKLN1, MAEA, RMND5A (or alternatively its paralog RMND5B), GID8, ARMC8, WDR26 and YPEL5. Within this complex, MAEA, RMND5A (or alternatively its paralog RMND5B), GID8, WDR26, and RANBP9 and/or RANBP10 form the catalytic core, while GID4, MKLN1, ARMC8 and YPEL5 have ancillary roles.

The protein resides in the cytoplasm. It localises to the cytosol. It carries out the reaction S-ubiquitinyl-[E2 ubiquitin-conjugating enzyme]-L-cysteine + [acceptor protein]-L-lysine = [E2 ubiquitin-conjugating enzyme]-L-cysteine + N(6)-ubiquitinyl-[acceptor protein]-L-lysine.. Core component of the CTLH E3 ubiquitin-protein ligase complex that selectively accepts ubiquitin from UBE2H and mediates ubiquitination and subsequent proteasomal degradation of the transcription factor HBP1. MAEA and RMND5A are both required for catalytic activity of the CTLH E3 ubiquitin-protein ligase complex. Catalytic activity of the complex is required for normal cell proliferation. The CTLH E3 ubiquitin-protein ligase complex is not required for the degradation of enzymes involved in gluconeogenesis, such as FBP1. The sequence is that of E3 ubiquitin-protein transferase RMND5B (Rmnd5b) from Mus musculus (Mouse).